Reading from the N-terminus, the 366-residue chain is MTERDSSPEADKNGLADVVEETGMAGFLGHLVELRNRLLKGVLAVLVLFLILFPFRNELFTMLADPLSRHMPAGSTMIAVEVASPFFIPLKLTALTAVFIAIPFLLYQLWAFIAPGLYKHERKLVAPLVFSSTILFYLGAAFAYFVVFPVVFGFLSTAGPSDVNFAPDIGEYLSFVTSLFFAFGFVFEVPVAIVLLVIVGVVTPDKLAGFRRYAILIAFIIAAILTPPDVLSQFMMALPIIMLYEFGLFVSRFFYKAKLARAAEVEAEESGAADDESDEAVSARHAEYEAKAQTQADEPLDMDKAFDEAEADQRRLESDSSASDDGPESNTAGRTEEGEQPSTGSKPEDEPNAPSEPSPKKPDSPV.

7 helical membrane-spanning segments follow: residues 42-62 (VLAV…LFTM), 70-90 (HMPA…FIPL), 97-117 (AVFI…APGL), 134-154 (ILFY…VFGF), 179-199 (LFFA…LVIV), 207-227 (LAGF…ILTP), and 230-250 (VLSQ…GLFV). Positions 266 to 279 (EAEESGAADDESDE) are enriched in acidic residues. Positions 266-366 (EAEESGAADD…PSPKKPDSPV (101 aa)) are disordered. Composition is skewed to basic and acidic residues over residues 281 to 290 (VSARHAEYEA) and 301 to 318 (DMDK…RLES). A compositionally biased stretch (polar residues) spans 319–333 (DSSASDDGPESNTAG).

This sequence belongs to the TatC family. As to quaternary structure, the Tat system comprises two distinct complexes: a TatABC complex, containing multiple copies of TatA, TatB and TatC subunits, and a separate TatA complex, containing only TatA subunits. Substrates initially bind to the TatABC complex, which probably triggers association of the separate TatA complex to form the active translocon.

The protein resides in the cell inner membrane. Part of the twin-arginine translocation (Tat) system that transports large folded proteins containing a characteristic twin-arginine motif in their signal peptide across membranes. Together with TatB, TatC is part of a receptor directly interacting with Tat signal peptides. This is Sec-independent protein translocase protein TatC from Halothiobacillus neapolitanus (strain ATCC 23641 / c2) (Thiobacillus neapolitanus).